Here is a 280-residue protein sequence, read N- to C-terminus: Succinate dehydrogenase [ubiquinone] iron-sulfur subunit, mitochondrial (280 aa).

Residues 1–28 (MAAVVALSLRRRFPAAALGGARLQACRG) constitute a mitochondrion transit peptide. Residues 40-133 (KKFAIYRWDP…VSKIYPLPHM (94 aa)) enclose the 2Fe-2S ferredoxin-type domain. Residues lysine 51 and lysine 55 each carry the N6-acetyllysine modification. The [2Fe-2S] cluster site is built by cysteine 93, cysteine 98, cysteine 101, and cysteine 113. Residues 146–218 (FYAQYKSIEP…PAVLMQAYRW (73 aa)) form an interaction with SDHAF1 region. The 4Fe-4S ferredoxin-type domain occupies 176 to 206 (DREKLDGLYECILCACCSTSCPSYWWNGDKY). 3 residues coordinate [4Fe-4S] cluster: cysteine 186, cysteine 189, and cysteine 192. Cysteine 196 lines the [3Fe-4S] cluster pocket. Tryptophan 201 is a binding site for a ubiquinone. [3Fe-4S] cluster is bound by residues cysteine 243 and cysteine 249. [4Fe-4S] cluster is bound at residue cysteine 253.

It belongs to the succinate dehydrogenase/fumarate reductase iron-sulfur protein family. Component of complex II composed of four subunits: the flavoprotein (FP) SDHA, iron-sulfur protein (IP) SDHB, and a cytochrome b560 composed of SDHC and SDHD. Interacts with SDHAF1; the interaction is required for iron-sulfur cluster incorporation into SDHB. The cofactor is [2Fe-2S] cluster. Requires [3Fe-4S] cluster as cofactor. [4Fe-4S] cluster serves as cofactor.

The protein localises to the mitochondrion inner membrane. The enzyme catalyses a quinone + succinate = fumarate + a quinol. It catalyses the reaction (R)-malate + a quinone = enol-oxaloacetate + a quinol. The catalysed reaction is (S)-malate + a quinone = enol-oxaloacetate + a quinol. It participates in carbohydrate metabolism; tricarboxylic acid cycle; fumarate from succinate (eukaryal route): step 1/1. Its activity is regulated as follows. Enol-oxaloacetate inhibits the succinate dehydrogenase activity. Functionally, iron-sulfur protein (IP) subunit of the succinate dehydrogenase complex (mitochondrial respiratory chain complex II), responsible for transferring electrons from succinate to ubiquinone (coenzyme Q). SDH also oxidizes malate to the non-canonical enol form of oxaloacetate, enol-oxaloacetate. Enol-oxaloacetate, which is a potent inhibitor of the succinate dehydrogenase activity, is further isomerized into keto-oxaloacetate. This chain is Succinate dehydrogenase [ubiquinone] iron-sulfur subunit, mitochondrial (SDHB), found in Bos taurus (Bovine).